Consider the following 204-residue polypeptide: Altered inheritance of mitochondria protein 20 (204 aa).

Residues 6-26 (VAVGTAVGIPIAVGVIIALIF) form a helical membrane-spanning segment.

This sequence belongs to the SKG1 family.

It is found in the vacuole membrane. In terms of biological role, involved in cell cycle progression and surviving DNA damage. The chain is Altered inheritance of mitochondria protein 20 (AIM20) from Saccharomyces cerevisiae (strain JAY291) (Baker's yeast).